The primary structure comprises 64 residues: MGQLGKIQRSTRQPIGLNGLFDPNNHSTRWWLRKHVHLRSLRNSDTSCKSRDKCSTFQSLQSYL.

This is an uncharacterized protein from Bdellovibrio phage phiMH2K (Bacteriophage phiMH2K).